We begin with the raw amino-acid sequence, 572 residues long: MTFRDLLSVSFEGPRPDSSAGGSSAGGGGGSAGGAAPSEGPAVGGVPGGAGGGGGVVGAGSGEDNRSSAGEPGSAGAGGDVNGTAAVGGLVVSAQGVGVGVFLAAFILMAVAGNLLVILSVACNRHLQTVTNYFIVNLAVADLLLSATVLPFSATMEVLGFWAFGRAFCDVWAAVDVLCCTASILSLCTISVDRYVGVRHSLKYPAIMTERKAAAILALLWVVALVVSVGPLLGWKEPVPPDERFCGITEEAGYAVFSSVCSFYLPMAVIVVMYCRVYVVARSTTRSLEAGVKRERGKASEVVLRIHCRGAATGADGAHGMRSAKGHTFRSSLSVRLLKFSREKKAAKTLAIVVGVFVLCWFPFFFVLPLGSLFPQLKPSEGVFKVIFWLGYFNSCVNPLIYPCSSREFKRAFLRLLRCQCRRRRRRRPLWRVYGHHWRASTSGLRQDCAPSSGDAPPGAPLALTALPDPDPEPPGTPEMQAPVASRRKPPSAFREWRLLGPFRRPTTQLRAKVSSLSHKIRAGGAQRAEAACAQRSEVEAVSLGVPHEVAEGATCQAYELADYSNLRETDI.

A disordered region spans residues 1–77 (MTFRDLLSVS…SAGEPGSAGA (77 aa)). Over 1 to 95 (MTFRDLLSVS…AVGGLVVSAQ (95 aa)) the chain is Extracellular. Composition is skewed to gly residues over residues 23-33 (SSAGGGGGSAG) and 42-61 (AVGGVPGGAGGGGGVVGAGS). Asparagine 65 and asparagine 82 each carry an N-linked (GlcNAc...) asparagine glycan. Residues 96–121 (GVGVGVFLAAFILMAVAGNLLVILSV) form a helical membrane-spanning segment. The Cytoplasmic portion of the chain corresponds to 122-133 (ACNRHLQTVTNY). Residues 134–159 (FIVNLAVADLLLSATVLPFSATMEVL) traverse the membrane as a helical segment. The Extracellular portion of the chain corresponds to 160–169 (GFWAFGRAFC). A helical membrane pass occupies residues 170-192 (DVWAAVDVLCCTASILSLCTISV). Topologically, residues 193–213 (DRYVGVRHSLKYPAIMTERKA) are cytoplasmic. A helical membrane pass occupies residues 214 to 238 (AAILALLWVVALVVSVGPLLGWKEP). Over 239 to 251 (VPPDERFCGITEE) the chain is Extracellular. Residues 252–275 (AGYAVFSSVCSFYLPMAVIVVMYC) form a helical membrane-spanning segment. The Cytoplasmic portion of the chain corresponds to 276 to 348 (RVYVVARSTT…KFSREKKAAK (73 aa)). Residues 349-373 (TLAIVVGVFVLCWFPFFFVLPLGSL) form a helical membrane-spanning segment. Topologically, residues 374-380 (FPQLKPS) are extracellular. The helical transmembrane segment at 381–405 (EGVFKVIFWLGYFNSCVNPLIYPCS) threads the bilayer. At 406–572 (SREFKRAFLR…DYSNLRETDI (167 aa)) the chain is on the cytoplasmic side. The S-palmitoyl cysteine moiety is linked to residue cysteine 419. Residues 444 to 488 (GLRQDCAPSSGDAPPGAPLALTALPDPDPEPPGTPEMQAPVASRR) form a disordered region. Low complexity predominate over residues 450 to 468 (APSSGDAPPGAPLALTALP).

The protein belongs to the G-protein coupled receptor 1 family. Adrenergic receptor subfamily. ADRA1D sub-subfamily. In terms of assembly, interacts with FLNA (via filamin repeat 21); increases PKA-mediated phosphorylation of FLNA. In terms of processing, palmitoylated. Palmitoylation by ZDHHC21 may increase the expression of the receptor and regulate downstream signaling.

It localises to the cell membrane. Functionally, this alpha-adrenergic receptor mediates its effect through the influx of extracellular calcium. The polypeptide is Alpha-1D adrenergic receptor (ADRA1D) (Homo sapiens (Human)).